We begin with the raw amino-acid sequence, 450 residues long: Glucose-6-phosphate isomerase (450 aa).

At Thr39 the chain carries Phosphothreonine. Glu291 functions as the Proton donor in the catalytic mechanism. Catalysis depends on residues His312 and Lys426.

Belongs to the GPI family.

The protein localises to the cytoplasm. It catalyses the reaction alpha-D-glucose 6-phosphate = beta-D-fructose 6-phosphate. It functions in the pathway carbohydrate biosynthesis; gluconeogenesis. Its pathway is carbohydrate degradation; glycolysis; D-glyceraldehyde 3-phosphate and glycerone phosphate from D-glucose: step 2/4. Its function is as follows. Catalyzes the reversible isomerization of glucose-6-phosphate to fructose-6-phosphate. The chain is Glucose-6-phosphate isomerase from Bacillus thuringiensis (strain Al Hakam).